Reading from the N-terminus, the 115-residue chain is Nucleoid-associated protein Rpic_1036 (115 aa).

It belongs to the YbaB/EbfC family. In terms of assembly, homodimer.

It localises to the cytoplasm. The protein localises to the nucleoid. Functionally, binds to DNA and alters its conformation. May be involved in regulation of gene expression, nucleoid organization and DNA protection. This is Nucleoid-associated protein Rpic_1036 from Ralstonia pickettii (strain 12J).